A 420-amino-acid polypeptide reads, in one-letter code: D-tagatose-1,6-bisphosphate aldolase subunit GatZ (420 aa).

Belongs to the GatZ/KbaZ family. GatZ subfamily. Forms a complex with GatY.

Its pathway is carbohydrate metabolism; D-tagatose 6-phosphate degradation; D-glyceraldehyde 3-phosphate and glycerone phosphate from D-tagatose 6-phosphate: step 2/2. In terms of biological role, component of the tagatose-1,6-bisphosphate aldolase GatYZ that is required for full activity and stability of the Y subunit. Could have a chaperone-like function for the proper and stable folding of GatY. When expressed alone, GatZ does not show any aldolase activity. Is involved in the catabolism of galactitol. This chain is D-tagatose-1,6-bisphosphate aldolase subunit GatZ, found in Escherichia coli O7:K1 (strain IAI39 / ExPEC).